The following is a 122-amino-acid chain: Large ribosomal subunit protein bL12 (122 aa).

Belongs to the bacterial ribosomal protein bL12 family. As to quaternary structure, homodimer. Part of the ribosomal stalk of the 50S ribosomal subunit. Forms a multimeric L10(L12)X complex, where L10 forms an elongated spine to which 2 to 4 L12 dimers bind in a sequential fashion. Binds GTP-bound translation factors.

Its function is as follows. Forms part of the ribosomal stalk which helps the ribosome interact with GTP-bound translation factors. Is thus essential for accurate translation. The protein is Large ribosomal subunit protein bL12 of Aliivibrio fischeri (strain ATCC 700601 / ES114) (Vibrio fischeri).